A 196-amino-acid polypeptide reads, in one-letter code: Probable peptidyl-prolyl cis-trans isomerase (196 aa).

Residues 1–26 form the signal peptide; that stretch reads MSFIRSALAAAAFVALSIGAVQTASA. A PPIase cyclophilin-type domain is found at 29 to 194; that stretch reads PENTVILKLK…KIIKATIEAD (166 aa).

The protein belongs to the cyclophilin-type PPIase family.

It is found in the periplasm. The catalysed reaction is [protein]-peptidylproline (omega=180) = [protein]-peptidylproline (omega=0). In terms of biological role, PPIases accelerate the folding of proteins. It catalyzes the cis-trans isomerization of proline imidic peptide bonds in oligopeptides. In Brucella abortus (strain 2308), this protein is Probable peptidyl-prolyl cis-trans isomerase (ppi).